The primary structure comprises 447 residues: GTPase Der (447 aa).

EngA-type G domains follow at residues 3-167 and 181-354; these read PVVA…NLPD and IKLA…KSAT. Residues 9–16, 56–60, 119–122, 187–194, 234–238, and 299–302 each bind GTP; these read GRPNVGKS, DTGGF, NKAE, DTAGL, and NKWD. The KH-like domain occupies 355 to 439; the sequence is RKMSTPVLTR…PLRIQFKSSQ (85 aa).

Belongs to the TRAFAC class TrmE-Era-EngA-EngB-Septin-like GTPase superfamily. EngA (Der) GTPase family. In terms of assembly, associates with the 50S ribosomal subunit.

In terms of biological role, GTPase that plays an essential role in the late steps of ribosome biogenesis. This chain is GTPase Der, found in Variovorax paradoxus (strain S110).